The primary structure comprises 727 residues: MPLFFRKRKPSEEARKRLEYQMCLAKEAGADDILDISKCELSEIPFGAFATCKVLQKKVLIVHTNHLTSLLPKSCSLLSLVTIKVLDLHENQLTALPDDMGQLTVLQVLNVERNQLTHLPRSIGNLLQLQTLNVKDNKLKELPDTLGELRSLRTLDISENEIQRLPQMLAHVRTLETLSLNALAMVYPPPEVCGAGTAAVQQFLCKESGLDYYPPSQYLLPVLEQDGAENTQDSPDGPASRFSREEAEWQNRFSDYEKRKEQKMLEKLEFERRLDLGQREHAELLQQSHSHKDEILQTVKQEQTRLEQDLSERQRCLDAERQQLQEQLKQTEQSIASRIQRLLQDNQRQKKSSEILKSLENERIRMEQLMSITQEETENLRQREIAAAMQQMLTESCKSRLIQMAYESQRQSLAQQACSSMAEMDKRFQQILSWQQMDQNKAISQILQESVMQKAAFEALQVKKDLMHRQIRNQIRLIETELLQLTQLELKRKSLDTETLQEMVSEQRWALSNLLQQLLKEKKQREEELHGILAELEAKSETKQENYWLIQYQRLLNQKPLSLKLQEEGMERRLVALLVELSAEHYLPLFAHHRISLDMLSRMSPGDLAKVGVSEAGLQHEILRRAQDLLAVPRVQPELKPLENEVLGALEPPTAPRELQESVRPSAPPAELDMPTSECVVCLEREAQMVFLTCGHVCCCQQCCQPLRTCPLCRQEISQRLRIYHSS.

LRR repeat units follow at residues 30 to 51, 56 to 77, 82 to 103, 105 to 126, 128 to 150, and 151 to 172; these read ADDI…AFAT, QKKV…SCSL, TIKV…MGQL, VLQV…IGNL, QLQT…GELR, and SLRT…LAHV. The disordered stretch occupies residues 227-248; the sequence is GAENTQDSPDGPASRFSREEAE. A Phosphoserine modification is found at serine 234. Coiled-coil stretches lie at residues 241–382 and 469–547; these read RFSR…NLRQ and RQIR…QENY. The 64-residue stretch at 569-632 folds into the SAM domain; that stretch reads GMERRLVALL…LRRAQDLLAV (64 aa). Serine 604 bears the Phosphoserine mark. Short sequence motifs (PTAP motif) lie at residues 653–656 and 665–668; these read PTAP and PSAP. The RING-type zinc-finger motif lies at 679–714; sequence CVVCLEREAQMVFLTCGHVCCCQQCCQPLRTCPLCR.

In terms of assembly, interacts with TSG101. Interacts with PHF23. Interacts with FUS. In terms of processing, ubiquitination promoted by PHF23 leads to proteasomal degradation. In terms of tissue distribution, widely expressed.

It is found in the cytoplasm. It catalyses the reaction S-ubiquitinyl-[E2 ubiquitin-conjugating enzyme]-L-cysteine + [acceptor protein]-L-lysine = [E2 ubiquitin-conjugating enzyme]-L-cysteine + N(6)-ubiquitinyl-[acceptor protein]-L-lysine.. The protein operates within protein modification; protein ubiquitination. Functionally, E3 ubiquitin-protein ligase that mediates monoubiquitination of TSG101 at multiple sites, leading to inactivate the ability of TSG101 to sort endocytic (EGF receptors) and exocytic (viral proteins) cargos. Bacterial recognition protein that defends the cytoplasm from invasive pathogens. Localizes to several intracellular bacterial pathogens and generates the bacteria-associated ubiquitin signal leading to autophagy-mediated intracellular bacteria degradation (xenophagy). This is E3 ubiquitin-protein ligase LRSAM1 from Mus musculus (Mouse).